The sequence spans 454 residues: MPVPQVAIVGRPNVGKSSLFNWLARRRLAIVDNFEGVTRDRMTTLIESDDQFFELIDTGGMGVEDADDLTSDVRRQIDMAIASADVILLVVDVQTGLMPLDEEVVERLRGVERPVILVANKADQEHQDIHADEFRRLGRGHLITVSTTQNRHRDDLIQVIVDRLPEKDEDLVAPESSMKIAIVGRRNVGKSTFVNTLAESDRMIVSEVAGTTRDSVDVRFEIDGQTFLAIDTPGLRKRKSIRTDLDFYGTHRAQRSVRRADVVLMFFDALEKTSKVDKQLVGYIMEHHKPVIFVVNKWDKVDKEVPTERWVKYLRHQFTTLSYAPIAFITGQTGRNVKAVMNHAAMLYKQAQSRVSTGELNRILRAAIEQHPPAMYQGRRPKIFYATQVSTEPPTVVVMCSDPKALTHDYQRYLIGWMRDHLPFGEVPIKLYMQQRSRSEAKAERSGQGRSLES.

2 EngA-type G domains span residues 4–168 and 178–352; these read PQVA…PEKD and MKIA…KQAQ. GTP-binding positions include 10–17, 57–61, 120–123, 184–191, 231–235, and 296–299; these read GRPNVGKS, DTGGM, NKAD, GRRNVGKS, DTPGL, and NKWD. In terms of domain architecture, KH-like spans 353–437; it reads SRVSTGELNR…PIKLYMQQRS (85 aa).

The protein belongs to the TRAFAC class TrmE-Era-EngA-EngB-Septin-like GTPase superfamily. EngA (Der) GTPase family. In terms of assembly, associates with the 50S ribosomal subunit.

In terms of biological role, GTPase that plays an essential role in the late steps of ribosome biogenesis. This chain is GTPase Der, found in Rhodopirellula baltica (strain DSM 10527 / NCIMB 13988 / SH1).